The chain runs to 841 residues: Rho guanine nucleotide exchange factor 15 (841 aa).

3 disordered regions span residues 1–179 (MSAQ…QARA), 239–261 (RRASPLRTSRSRPHPPSIGHPAV), and 279–333 (KPPK…REEE). Polar residues predominate over residues 39-53 (NGSSPQELPRNSNDA). Over residues 65–110 (PPAASLKPPALLPPSASRASLDSQTSPDSPSSTPTPSPVSRRSASP) the composition is skewed to low complexity. Residues S107 and S109 each carry the phosphoserine modification. Residues 111-124 (EPAPRSPVPPPKPS) show a composition bias toward pro residues. Position 353 is a phosphotyrosine; by EPHB2 (Y353). The DH domain maps to 417-601 (RMQESLFEVV…SKIIERCSAE (185 aa)). Residues 765–793 (ESSAPAKTEGRSLESRAAPKHLHKTPEGW) are disordered.

Interacts with EPHB2. Interacts with EPHA4. Post-translationally, phosphorylated on tyrosine residues upon EFNA1 stimulation. EPHB2-dependent phosphorylation at Tyr-353 triggers UBE3A-mediated ubiquitination. In terms of processing, ubiquitinated; UBE3A-mediated ubiquitination and degradation by the proteasome promotes EFNB1-dependent synapse formation. As to expression, expressed in the vascular smooth muscle of coronary artery.

The protein localises to the cell projection. It localises to the dendrite. Functionally, specific GEF for RhoA activation. Does not activate RAC1 or CDC42. Regulates vascular smooth muscle contractility. Negatively regulates excitatory synapse development by suppressing the synapse-promoting activity of EPHB2. This chain is Rho guanine nucleotide exchange factor 15 (ARHGEF15), found in Homo sapiens (Human).